A 560-amino-acid chain; its full sequence is N-acetylglucosamine-6-sulfatase (560 aa).

Residues 1–25 (MRLLSLAPDRPRRGGPRHLTSGSPA) are disordered. The signal sequence occupies residues 1 to 48 (MRLLSLAPDRPRRGGPRHLTSGSPALPPPPPLLLLLLLLGGCLGVSGA). Positions 63, 64, and 99 each coordinate Ca(2+). Cys99 serves as the catalytic Nucleophile. The residue at position 99 (Cys99) is a 3-oxoalanine (Cys). Asn119, Asn125, Asn191, Asn206, Asn218, Asn287, and Asn325 each carry an N-linked (GlcNAc...) asparagine glycan. The Ca(2+) site is built by Asp334 and Asn335. Asn370, Asn395, Asn413, Asn430, Asn457, and Asn488 each carry an N-linked (GlcNAc...) asparagine glycan. Ser549 is modified (phosphoserine).

It belongs to the sulfatase family. Requires Ca(2+) as cofactor. In terms of processing, the conversion to 3-oxoalanine (also known as C-formylglycine, FGly), of a serine or cysteine residue in prokaryotes and of a cysteine residue in eukaryotes, is critical for catalytic activity.

The protein resides in the lysosome. It carries out the reaction Hydrolysis of the 6-sulfate groups of the N-acetyl-D-glucosamine 6-sulfate units of heparan sulfate and keratan sulfate.. Its function is as follows. Hydrolyzes 6-sulfate groups in N-acetyl-d-glucosaminide units of heparin sulfate and keratan sulfate. In Bos taurus (Bovine), this protein is N-acetylglucosamine-6-sulfatase (GNS).